We begin with the raw amino-acid sequence, 153 residues long: Small ribosomal subunit protein uS13 (153 aa).

The disordered stretch occupies residues 132–153 (VRGQRTRSHHRKGRTVGVIKKK). The span at 135–153 (QRTRSHHRKGRTVGVIKKK) shows a compositional bias: basic residues.

The protein belongs to the universal ribosomal protein uS13 family. In terms of assembly, part of the 30S ribosomal subunit. Forms a loose heterodimer with protein S19. Forms two bridges to the 50S subunit in the 70S ribosome.

In terms of biological role, located at the top of the head of the 30S subunit, it contacts several helices of the 16S rRNA. In the 70S ribosome it contacts the 23S rRNA (bridge B1a) and protein L5 of the 50S subunit (bridge B1b), connecting the 2 subunits; these bridges are implicated in subunit movement. This Nanoarchaeum equitans (strain Kin4-M) protein is Small ribosomal subunit protein uS13.